Here is a 718-residue protein sequence, read N- to C-terminus: SANT and BTB domain regulator of class switch recombination (718 aa).

The SANT domain maps to 21-59 (DMILYPLIGIPQTINWETIARLVPGLTPKECAKRFDELK). Residues 118-134 (ASTRNCSSESENCTTHN) show a composition bias toward polar residues. The disordered stretch occupies residues 118–142 (ASTRNCSSESENCTTHNGGEMTEES). The BTB domain maps to 147-255 (MVIHVCDEAK…QCIQYCHKNM (109 aa)). Residues 555 to 576 (SEEEEYTTGSEVTEDEVGDEEE) are compositionally biased toward acidic residues. 2 disordered regions span residues 555–622 (SEEE…SPFV) and 692–718 (SVPV…GRPA). Residues 580–595 (KQRKKEKPKKFTRQPK) show a composition bias toward basic residues. Basic and acidic residues predominate over residues 604-615 (QRKEKALEKSAS).

Belongs to the KIAA1841 family. Homodimer. Interacts (via the BTB domain) with HDAC1 and NCOR2.

Functionally, negatively regulates class switch recombination or isotype switching in splenic B-cells. The sequence is that of SANT and BTB domain regulator of class switch recombination from Homo sapiens (Human).